A 230-amino-acid polypeptide reads, in one-letter code: Extracellular ribonuclease LE (230 aa).

The first 25 residues, 1 to 25 (MASNSAFSLFLILLIITQCLSVLNA), serve as a signal peptide directing secretion. Gln-37 contacts RNA. Cystine bridges form between Cys-43-Cys-49, Cys-50-Cys-106, Cys-79-Cys-125, Cys-186-Cys-221, and Cys-202-Cys-213. RNA-binding positions include His-64, Phe-114, 117–118 (HE), and 121–122 (KH). The active-site Proton donor is His-64. Glu-118 is an active-site residue. His-122 (proton acceptor) is an active-site residue.

The protein belongs to the RNase T2 family.

The protein resides in the secreted. It is found in the extracellular space. Its subcellular location is the cell wall. The enzyme catalyses a ribonucleotidyl-ribonucleotide-RNA + H2O = a 3'-end 3'-phospho-ribonucleotide-RNA + a 5'-end dephospho-ribonucleoside-RNA + H(+). Its function is as follows. Probably involved in plant phosphate-starvation rescue system. This chain is Extracellular ribonuclease LE, found in Solanum lycopersicum (Tomato).